The chain runs to 284 residues: Diaminopimelate epimerase (284 aa).

Residues N14 and N67 each coordinate substrate. C76 functions as the Proton donor in the catalytic mechanism. Residues 77-78, N166, N199, and 217-218 contribute to the substrate site; these read GN and ER. Catalysis depends on C226, which acts as the Proton acceptor. 227-228 lines the substrate pocket; sequence GT.

It belongs to the diaminopimelate epimerase family. In terms of assembly, homodimer.

The protein localises to the cytoplasm. It catalyses the reaction (2S,6S)-2,6-diaminopimelate = meso-2,6-diaminopimelate. The protein operates within amino-acid biosynthesis; L-lysine biosynthesis via DAP pathway; DL-2,6-diaminopimelate from LL-2,6-diaminopimelate: step 1/1. Catalyzes the stereoinversion of LL-2,6-diaminopimelate (L,L-DAP) to meso-diaminopimelate (meso-DAP), a precursor of L-lysine and an essential component of the bacterial peptidoglycan. This chain is Diaminopimelate epimerase, found in Geobacillus sp. (strain WCH70).